The primary structure comprises 174 residues: NADPH-dependent 7-cyano-7-deazaguanine reductase (174 aa).

Catalysis depends on Cys72, which acts as the Thioimide intermediate. The active-site Proton donor is the Asp79. Residues 94 to 96 (VES) and 113 to 114 (HE) contribute to the substrate site.

This sequence belongs to the GTP cyclohydrolase I family. QueF type 1 subfamily.

It localises to the cytoplasm. It catalyses the reaction 7-aminomethyl-7-carbaguanine + 2 NADP(+) = 7-cyano-7-deazaguanine + 2 NADPH + 3 H(+). The protein operates within tRNA modification; tRNA-queuosine biosynthesis. In terms of biological role, catalyzes the NADPH-dependent reduction of 7-cyano-7-deazaguanine (preQ0) to 7-aminomethyl-7-deazaguanine (preQ1). This Synechococcus elongatus (strain ATCC 33912 / PCC 7942 / FACHB-805) (Anacystis nidulans R2) protein is NADPH-dependent 7-cyano-7-deazaguanine reductase.